Here is a 332-residue protein sequence, read N- to C-terminus: Glycerol-3-phosphate dehydrogenase [NAD(P)+] (332 aa).

NADPH contacts are provided by Ser11, Trp12, Arg32, Arg33, and Lys106. The sn-glycerol 3-phosphate site is built by Lys106 and Gly136. Ala140 is a binding site for NADPH. Residues Lys191, Asp244, Ser254, Arg255, and Asn256 each contribute to the sn-glycerol 3-phosphate site. Catalysis depends on Lys191, which acts as the Proton acceptor. Arg255 contacts NADPH. Val280 and Glu282 together coordinate NADPH.

It belongs to the NAD-dependent glycerol-3-phosphate dehydrogenase family.

Its subcellular location is the cytoplasm. The catalysed reaction is sn-glycerol 3-phosphate + NAD(+) = dihydroxyacetone phosphate + NADH + H(+). It carries out the reaction sn-glycerol 3-phosphate + NADP(+) = dihydroxyacetone phosphate + NADPH + H(+). Its pathway is membrane lipid metabolism; glycerophospholipid metabolism. Catalyzes the reduction of the glycolytic intermediate dihydroxyacetone phosphate (DHAP) to sn-glycerol 3-phosphate (G3P), the key precursor for phospholipid synthesis. This Corynebacterium aurimucosum (strain ATCC 700975 / DSM 44827 / CIP 107346 / CN-1) (Corynebacterium nigricans) protein is Glycerol-3-phosphate dehydrogenase [NAD(P)+].